The following is a 109-amino-acid chain: Phycoerythrin alpha-1 subunit (109 aa).

Residues valine 6, alanine 16, phenylalanine 17, proline 20, aspartate 27, alanine 28, and alanine 39 each coordinate (2R,3E)-phycocyanobilin.

The protein belongs to the phycoerythrin family. Heterotetramer of 2 identical alpha chains and 2 identical beta chains which form 2 alpha-beta heterodimers within the heterotetramer. The two alpha-beta heterodimers are rotated to an open configuration in contrast to the closed configuration found in other cryptophyte species due to the insertion of a single amino acid, Asp-65, in a conserved region of the alpha chain. In the open form, the central chromophores are not in physical contact but are separated by a water-filled channel. In terms of processing, contains three phycocyanobilin chromophores with binding mediated by both the alpha and beta subunits.

It localises to the plastid. The protein resides in the chloroplast thylakoid membrane. In terms of biological role, light-harvesting photosynthetic tetrapyrrole chromophore-protein from the phycobiliprotein complex. This chain is Phycoerythrin alpha-1 subunit, found in Hemiselmis virescens.